The primary structure comprises 247 residues: Adenosylcobinamide-GDP ribazoletransferase (247 aa).

Transmembrane regions (helical) follow at residues 1-21 (MLRLYFVALQFLAIIPIPFSF), 37-57 (LVGLTLGLLLAGCDYLLALAL), 61-81 (VADLLLVAILALVTGALHLDG), 109-129 (AVGVVGLVLALLLKYQALFAV), and 176-196 (VAVAAFFTVVTGWLLLGLPGI).

Belongs to the CobS family. Mg(2+) serves as cofactor.

The protein localises to the cell inner membrane. The catalysed reaction is alpha-ribazole + adenosylcob(III)inamide-GDP = adenosylcob(III)alamin + GMP + H(+). It carries out the reaction alpha-ribazole 5'-phosphate + adenosylcob(III)inamide-GDP = adenosylcob(III)alamin 5'-phosphate + GMP + H(+). The protein operates within cofactor biosynthesis; adenosylcobalamin biosynthesis; adenosylcobalamin from cob(II)yrinate a,c-diamide: step 7/7. Its function is as follows. Joins adenosylcobinamide-GDP and alpha-ribazole to generate adenosylcobalamin (Ado-cobalamin). Also synthesizes adenosylcobalamin 5'-phosphate from adenosylcobinamide-GDP and alpha-ribazole 5'-phosphate. This chain is Adenosylcobinamide-GDP ribazoletransferase, found in Geotalea daltonii (strain DSM 22248 / JCM 15807 / FRC-32) (Geobacter daltonii).